A 352-amino-acid chain; its full sequence is Uroporphyrinogen decarboxylase (352 aa).

Substrate is bound by residues 27-31, D77, Y154, T209, and H325; that span reads RQAGR.

Belongs to the uroporphyrinogen decarboxylase family. Homodimer.

It localises to the cytoplasm. The enzyme catalyses uroporphyrinogen III + 4 H(+) = coproporphyrinogen III + 4 CO2. The protein operates within porphyrin-containing compound metabolism; protoporphyrin-IX biosynthesis; coproporphyrinogen-III from 5-aminolevulinate: step 4/4. Its function is as follows. Catalyzes the decarboxylation of four acetate groups of uroporphyrinogen-III to yield coproporphyrinogen-III. The polypeptide is Uroporphyrinogen decarboxylase (Legionella pneumophila subsp. pneumophila (strain Philadelphia 1 / ATCC 33152 / DSM 7513)).